Here is a 131-residue protein sequence, read N- to C-terminus: Global transcriptional regulator Spx (131 aa).

Residues cysteine 10 and cysteine 13 are joined by a disulfide bond.

Belongs to the ArsC family. Spx subfamily. In terms of assembly, interacts with the C-terminal domain of the alpha subunit of the RNAP.

Its subcellular location is the cytoplasm. Functionally, global transcriptional regulator that plays a key role in stress response and exerts either positive or negative regulation of genes. Acts by interacting with the C-terminal domain of the alpha subunit of the RNA polymerase (RNAP). This interaction can enhance binding of RNAP to the promoter region of target genes and stimulate their transcription, or block interaction of RNAP with activator. This chain is Global transcriptional regulator Spx, found in Listeria innocua serovar 6a (strain ATCC BAA-680 / CLIP 11262).